We begin with the raw amino-acid sequence, 313 residues long: Porphobilinogen deaminase (313 aa).

Position 242 is an S-(dipyrrolylmethanemethyl)cysteine (Cys-242).

It belongs to the HMBS family. As to quaternary structure, monomer. Requires dipyrromethane as cofactor.

The catalysed reaction is 4 porphobilinogen + H2O = hydroxymethylbilane + 4 NH4(+). The protein operates within porphyrin-containing compound metabolism; protoporphyrin-IX biosynthesis; coproporphyrinogen-III from 5-aminolevulinate: step 2/4. Functionally, tetrapolymerization of the monopyrrole PBG into the hydroxymethylbilane pre-uroporphyrinogen in several discrete steps. The chain is Porphobilinogen deaminase from Escherichia coli (strain K12 / MC4100 / BW2952).